A 172-amino-acid polypeptide reads, in one-letter code: Protein-export protein SecB (172 aa).

Residues alanine 152–histidine 172 are disordered.

Belongs to the SecB family. Homotetramer, a dimer of dimers. One homotetramer interacts with 1 SecA dimer.

It localises to the cytoplasm. One of the proteins required for the normal export of preproteins out of the cell cytoplasm. It is a molecular chaperone that binds to a subset of precursor proteins, maintaining them in a translocation-competent state. It also specifically binds to its receptor SecA. The protein is Protein-export protein SecB of Cupriavidus necator (strain ATCC 17699 / DSM 428 / KCTC 22496 / NCIMB 10442 / H16 / Stanier 337) (Ralstonia eutropha).